Consider the following 285-residue polypeptide: 4-diphosphocytidyl-2-C-methyl-D-erythritol kinase (285 aa).

The active site involves lysine 12. An ATP-binding site is contributed by 94–104 (PAQAGMGGGSS). Aspartate 136 is an active-site residue.

Belongs to the GHMP kinase family. IspE subfamily.

It catalyses the reaction 4-CDP-2-C-methyl-D-erythritol + ATP = 4-CDP-2-C-methyl-D-erythritol 2-phosphate + ADP + H(+). It functions in the pathway isoprenoid biosynthesis; isopentenyl diphosphate biosynthesis via DXP pathway; isopentenyl diphosphate from 1-deoxy-D-xylulose 5-phosphate: step 3/6. Its function is as follows. Catalyzes the phosphorylation of the position 2 hydroxy group of 4-diphosphocytidyl-2C-methyl-D-erythritol. In Paracidovorax citrulli (strain AAC00-1) (Acidovorax citrulli), this protein is 4-diphosphocytidyl-2-C-methyl-D-erythritol kinase.